A 393-amino-acid chain; its full sequence is Protein TsgA (393 aa).

Transmembrane regions (helical) follow at residues 11-31 (WISFLSYALTGALVIVTGMVM), 51-71 (FLNAGILISIFLNAWLMEIIP), 78-98 (FGFILMVLAVAGLMFSHSLAL), 101-121 (AAMFVLGLVSGITMSIGTFLI), 134-154 (LLFTDSFFSMAGMIFPMVAAF), 162-182 (WYWVYACIGLVYLAIFILTFG), 206-226 (IGVLFLAVAALCYILGQLGFI), 245-265 (ALVSDFWMSYMFGMWAFSFIL), 273-293 (ILTVLAGMAAVLMYLFITGTQ), 298-318 (WFILTLGFFSSAIYTSIITLG), 332-352 (FILTCGTIGTMLTFVVTGPIV), and 361-381 (LLTANGLYAVVFVMCFALGFV).

It belongs to the major facilitator superfamily. TsgA family.

The protein localises to the cell inner membrane. In Salmonella paratyphi B (strain ATCC BAA-1250 / SPB7), this protein is Protein TsgA.